A 1631-amino-acid polypeptide reads, in one-letter code: Ras GTPase-activating-like protein IQGAP3 (1631 aa).

One can recognise a Calponin-homology (CH) domain in the interval 34-149 (LCRLEEAKRW…YCIHALSLFL (116 aa)). Tyrosine 162 carries the post-translational modification Phosphotyrosine. Serine 539 is subject to Phosphoserine. 4 IQ domains span residues 730–759 (NVGF…FLRT), 760–789 (WLPA…YFKA), 790–819 (NLDA…YFQK), and 820–849 (NVNS…APHP). The 250-residue stretch at 1004–1253 (YLLLQLFKTA…LKFRKFIHRA (250 aa)) folds into the Ras-GAP domain. Serine 1424 is subject to Phosphoserine.

The polypeptide is Ras GTPase-activating-like protein IQGAP3 (IQGAP3) (Homo sapiens (Human)).